A 448-amino-acid polypeptide reads, in one-letter code: Phosphoglucosamine mutase (448 aa).

Catalysis depends on Ser-100, which acts as the Phosphoserine intermediate. 4 residues coordinate Mg(2+): Ser-100, Asp-240, Asp-242, and Asp-244. Phosphoserine is present on Ser-100.

Belongs to the phosphohexose mutase family. Mg(2+) serves as cofactor. Post-translationally, activated by phosphorylation.

It catalyses the reaction alpha-D-glucosamine 1-phosphate = D-glucosamine 6-phosphate. Catalyzes the conversion of glucosamine-6-phosphate to glucosamine-1-phosphate. The protein is Phosphoglucosamine mutase of Clostridioides difficile (strain 630) (Peptoclostridium difficile).